The following is an 814-amino-acid chain: MTDDRDKTNEDPEKIIEADFNPEDPDDADIAEDAKEGLVVATDVLPSTLPIIPLRPRPAFPGILTPMVFTGEKHVALAKRAVDTPSKMMGLVLAKEVDEPDSLENLHRFGVVGRVMKVLHTDDDSIHLLVNCLERFSIRELTESEEGLFARVDYHYATELSVNPELKAYSMAIITTLKELVQINPLYSEEIKMFLNRQSMDDPGRLTDFAANLTSGDGQLLQEILETIDVRNRIDKVLVLLKKELEVSRLQTKISKQIEQKVSAQQREFFLREQLKAIKKELGLEKEGKVSEIEKYQKRLKNLTLSEEAQKTIDEEIEKLRLIEPSSPEYNVSRNYLDWLTILPWGKFSKDNYNIERARRVLDRDHYGLKDVKDRILEFIAVGMLKGDISGSILCLVGPPGVGKTSIGKSIAAALNRTFYRFSLGGMRDEAEIKGHRRTYIGAMPGRFIQAMKSAGTANPVLMLDEIDKVGASFQGDPASALLEVLDPEQNSSFRDHYLDVPFDLSNVLFVATANQLDTIPAPLLDRMEIIRLAGYILEEKLEIARRYLIPKALENHGLKKGQVTIRKDALRAIIDGYAREAGVRNLENRIKKIMRHAAMEFSQGRTDKITVSKKDVAAILGKPIFTEEEVFEDVPGVVTGLAWTSMGGATLQIEATAMPSRNKGFKQTGQLGKVMVESSDIAYSYVMAHLEEYGADPEFFDKHFVHLHVPAGATPKDGPSAGVTMATALLSMITGKPVIKKLGMTGELTLTGKVLPIGGVKEKIIAVKRIGLTTVILPEANRKDFEELPDHLRENLSVHFAGDYRDVYQVAFG.

The span at 1–17 (MTDDRDKTNEDPEKIIE) shows a compositional bias: basic and acidic residues. The tract at residues 1 to 28 (MTDDRDKTNEDPEKIIEADFNPEDPDDA) is disordered. Residues 49 to 245 (LPIIPLRPRP…KVLVLLKKEL (197 aa)) enclose the Lon N-terminal domain. 398 to 405 (GPPGVGKT) is a binding site for ATP. The 182-residue stretch at 633-814 (EDVPGVVTGL…YRDVYQVAFG (182 aa)) folds into the Lon proteolytic domain. Residues serine 721 and lysine 764 contribute to the active site.

The protein belongs to the peptidase S16 family. Homohexamer. Organized in a ring with a central cavity.

It is found in the cytoplasm. The catalysed reaction is Hydrolysis of proteins in presence of ATP.. Functionally, ATP-dependent serine protease that mediates the selective degradation of mutant and abnormal proteins as well as certain short-lived regulatory proteins. Required for cellular homeostasis and for survival from DNA damage and developmental changes induced by stress. Degrades polypeptides processively to yield small peptide fragments that are 5 to 10 amino acids long. Binds to DNA in a double-stranded, site-specific manner. The sequence is that of Lon protease 1 from Syntrophotalea carbinolica (strain DSM 2380 / NBRC 103641 / GraBd1) (Pelobacter carbinolicus).